Consider the following 256-residue polypeptide: Thiazole synthase (256 aa).

Residue Lys-95 is the Schiff-base intermediate with DXP of the active site. 1-deoxy-D-xylulose 5-phosphate contacts are provided by residues Gly-156, 182–183 (AG), and 204–205 (NT).

It belongs to the ThiG family. As to quaternary structure, homotetramer. Forms heterodimers with either ThiH or ThiS.

It is found in the cytoplasm. It carries out the reaction [ThiS sulfur-carrier protein]-C-terminal-Gly-aminoethanethioate + 2-iminoacetate + 1-deoxy-D-xylulose 5-phosphate = [ThiS sulfur-carrier protein]-C-terminal Gly-Gly + 2-[(2R,5Z)-2-carboxy-4-methylthiazol-5(2H)-ylidene]ethyl phosphate + 2 H2O + H(+). The protein operates within cofactor biosynthesis; thiamine diphosphate biosynthesis. In terms of biological role, catalyzes the rearrangement of 1-deoxy-D-xylulose 5-phosphate (DXP) to produce the thiazole phosphate moiety of thiamine. Sulfur is provided by the thiocarboxylate moiety of the carrier protein ThiS. In vitro, sulfur can be provided by H(2)S. This chain is Thiazole synthase, found in Salmonella arizonae (strain ATCC BAA-731 / CDC346-86 / RSK2980).